Here is a 979-residue protein sequence, read N- to C-terminus: METGSPGKRPVLPKRARLLVTAGMGMLALLLFGPRLVDIYVDWLWFGEVGFRSVWITVLLTRLAIVAAVALVVAGIVLAALLLAYRSRPFFVPDEPQRDPVAPLRSAVMRRPRLFGWGIAVTLGVVCGLIASFDWVKVQLFVHGGTFGIVDPEFGYDIGFFVFDLPFYRSVLNWLFVAVVLAFLASLLTHYLFGGLRLTTGRGMLTQAARVQLAVFAGAVVLLKAVAYWLDRYELLSSGRKEPTFTGAGYTDIHAELPAKLVLVAIAVLCAVSFFTAIFLRDLRIPAMAAALLVLSAILVGGLWPLLMEQFSVRPNAADVERPYIQRNIEATREAYRIGGDWVQYRSYPGIGTKQPRDVPVDVTTIAKVRLLDPHILSRTFTQQQQLKNFFSFAEILDIDRYRIDGELQDYIVGVRELSPKSLTGNQTDWINKHTVYTHGNGFVAAPANRVNAAARDAENISDSNSGYPIYAVSDIASLGSGRQVIPVEQPRVYYGEVIAQADPDYAIVGGAPGSAPREYDTDTSKYTYTGAGGVSIGNWFNRTVFATKVAQHKFLFSREIGSESKVLIHRDPKERVQRVAPWLTTDDNPYPVVVNGRIVWIVDAYTTLDTYPYAQRSSLEGPVTSPTGIVRQGKQVSYVRNSVKATVDAYDGTVTLFQFDRDDPVLRTWMRAFPGTVKSEDQIPDELRAHFRYPEDLFEVQRSLLAKYHVDEPREFFTTNAFWSVPSDPTNNANATQPPFYVLVGDQQSAQPSFRLASAMVGYNREFLSAYISAHSDPANYGKLTVLELPTDTLTQGPQQIQNSMISDTRVASERTLLERSNRIHYGNLLSLPIADGGVLYVEPLYTERISTSPSSSTFPQLSRVLVSVREPRTEGGVRVGYAPTLAESLDQVFGPGTGRVATARGGDAASAPPPGAGGPAPPQAVPPPRTTQPPAAPPRGPDVPPATVAELRETLADLRAVLDRLEKAIDAAETPGG.

7 helical membrane-spanning segments follow: residues 19–39 (LVTA…LVDI), 63–83 (LAIV…ALLL), 114–134 (LFGW…ASFD), 174–194 (WLFV…YLFG), 211–231 (VQLA…YWLD), 260–280 (KLVL…AIFL), and 288–308 (MAAA…PLLM). Positions 898-948 (GTGRVATARGGDAASAPPPGAGGPAPPQAVPPPRTTQPPAAPPRGPDVPPA) are disordered. The segment covering 913–946 (APPPGAGGPAPPQAVPPPRTTQPPAAPPRGPDVP) has biased composition (pro residues).

It belongs to the UPF0182 family.

Its subcellular location is the cell membrane. The polypeptide is UPF0182 protein MRA_0066 (Mycobacterium tuberculosis (strain ATCC 25177 / H37Ra)).